The primary structure comprises 191 residues: Peptidyl-tRNA hydrolase (191 aa).

Y14 contacts tRNA. The active-site Proton acceptor is H19. Residues Y64, N66, and N112 each coordinate tRNA.

Belongs to the PTH family. In terms of assembly, monomer.

The protein resides in the cytoplasm. The enzyme catalyses an N-acyl-L-alpha-aminoacyl-tRNA + H2O = an N-acyl-L-amino acid + a tRNA + H(+). In terms of biological role, hydrolyzes ribosome-free peptidyl-tRNAs (with 1 or more amino acids incorporated), which drop off the ribosome during protein synthesis, or as a result of ribosome stalling. Functionally, catalyzes the release of premature peptidyl moieties from peptidyl-tRNA molecules trapped in stalled 50S ribosomal subunits, and thus maintains levels of free tRNAs and 50S ribosomes. This is Peptidyl-tRNA hydrolase from Lachnoclostridium phytofermentans (strain ATCC 700394 / DSM 18823 / ISDg) (Clostridium phytofermentans).